A 305-amino-acid polypeptide reads, in one-letter code: MQIDKVKVAILGSGNIGTDLMYKLLKQPGRMELALVAGIDPASEGLARARQIGIPTATDGIESILADPDIRIVFDATSAKAHVRHARLLRDHGRIAIDLTPAARGPYVVPPVNLGEHLEAHNVNLITCGGQATIPLVYAVSRVTAVRYAEMVSTVASRSAGPGTRQNIDEFTFTTARGLEAIGGAREAKAIIILNPAHPPILMRNTIYVVPEGDFDEETVRQSVAQMVADVQQYVPGYRLKSLPVIEQRSTPWGERPVIIMLLEVEGAGDFLPTYAGNLDIMTAAARRVGELFAAHLLSKLEVTV.

13–16 (SGNI) is an NAD(+) binding site. Cys-128 functions as the Acyl-thioester intermediate in the catalytic mechanism. NAD(+) contacts are provided by residues 159 to 167 (SAGPGTRQN) and Asn-278.

It belongs to the acetaldehyde dehydrogenase family.

It catalyses the reaction acetaldehyde + NAD(+) + CoA = acetyl-CoA + NADH + H(+). This Chloroflexus aurantiacus (strain ATCC 29366 / DSM 635 / J-10-fl) protein is Acetaldehyde dehydrogenase.